The primary structure comprises 101 residues: Small ribosomal subunit protein uS14 (101 aa).

Over residues 1-10 (MAKKSSIEKN) the composition is skewed to basic and acidic residues. A disordered region spans residues 1–24 (MAKKSSIEKNNRRKRLTKNAAPKR). Residues 11–24 (NRRKRLTKNAAPKR) show a composition bias toward basic residues.

Belongs to the universal ribosomal protein uS14 family. Part of the 30S ribosomal subunit. Contacts proteins S3 and S10.

In terms of biological role, binds 16S rRNA, required for the assembly of 30S particles and may also be responsible for determining the conformation of the 16S rRNA at the A site. The protein is Small ribosomal subunit protein uS14 of Rhodopseudomonas palustris (strain BisB18).